Consider the following 311-residue polypeptide: Oxygen-dependent coproporphyrinogen-III oxidase (311 aa).

Substrate is bound at residue Ser100. A divalent metal cation is bound by residues His104 and His114. Catalysis depends on His114, which acts as the Proton donor. Residue 116-118 (NVR) participates in substrate binding. Residues His153 and His183 each contribute to the a divalent metal cation site. The important for dimerization stretch occupies residues 248–283 (YAEFNLVYDRGTLFGLQSGGRTESILMSLPPIVHWE). 266–268 (GGR) is a substrate binding site.

It belongs to the aerobic coproporphyrinogen-III oxidase family. As to quaternary structure, homodimer. The cofactor is a divalent metal cation.

It is found in the cytoplasm. It carries out the reaction coproporphyrinogen III + O2 + 2 H(+) = protoporphyrinogen IX + 2 CO2 + 2 H2O. It participates in porphyrin-containing compound metabolism; protoporphyrin-IX biosynthesis; protoporphyrinogen-IX from coproporphyrinogen-III (O2 route): step 1/1. Functionally, involved in the heme biosynthesis. Catalyzes the aerobic oxidative decarboxylation of propionate groups of rings A and B of coproporphyrinogen-III to yield the vinyl groups in protoporphyrinogen-IX. The polypeptide is Oxygen-dependent coproporphyrinogen-III oxidase (Legionella pneumophila (strain Corby)).